We begin with the raw amino-acid sequence, 93 residues long: Phosphoribosyl-ATP pyrophosphatase (93 aa).

Belongs to the PRA-PH family.

It is found in the cytoplasm. It carries out the reaction 1-(5-phospho-beta-D-ribosyl)-ATP + H2O = 1-(5-phospho-beta-D-ribosyl)-5'-AMP + diphosphate + H(+). It participates in amino-acid biosynthesis; L-histidine biosynthesis; L-histidine from 5-phospho-alpha-D-ribose 1-diphosphate: step 2/9. This chain is Phosphoribosyl-ATP pyrophosphatase, found in Corynebacterium aurimucosum (strain ATCC 700975 / DSM 44827 / CIP 107346 / CN-1) (Corynebacterium nigricans).